The primary structure comprises 86 residues: 4-hydroxyphenylacetate decarboxylase small subunit (86 aa).

Histidine 3, cysteine 6, cysteine 19, cysteine 36, cysteine 45, cysteine 48, cysteine 62, and cysteine 80 together coordinate [4Fe-4S] cluster.

It belongs to the HPA decarboxylase small subunit family. In terms of assembly, heterooctamer consisting of 4 large (HpdB) subunits and 4 small (HpdC) subunits, arranged as a tetramer of heterodimers. Requires [4Fe-4S] cluster as cofactor.

It catalyses the reaction 4-hydroxyphenylacetate + H(+) = 4-methylphenol + CO2. It carries out the reaction 3,4-dihydroxyphenylacetate + H(+) = 4-methylcatechol + CO2. In terms of biological role, component of the HPA decarboxylase that decarboxylates phenylacetates with a hydroxyl group in the p-position. Active toward 4-hydroxyphenylacetate and 3,4-dihydroxyphenylacetate, forming 4-methylphenol and 4-methylcatechol, respectively. Is likely involved in the catabolism of aromatic amino acids such as tyrosine fermentation. 4-methylphenol (p-cresol) formation provides metabolic toxicity, which allows an active suppression of other microbes and may provide growth advantages for the producers in highly competitive environments. The small subunit is essential for enzymatic activity of HPA decarboxylase, and also seems to be involved in the regulation of the enzyme oligomeric state and catalytic activity. The protein is 4-hydroxyphenylacetate decarboxylase small subunit of Clostridium scatologenes.